Reading from the N-terminus, the 492-residue chain is Glutamyl-tRNA(Gln) amidotransferase subunit A (492 aa).

Catalysis depends on charge relay system residues Lys-78 and Ser-158. The Acyl-ester intermediate role is filled by Ser-182.

It belongs to the amidase family. GatA subfamily. In terms of assembly, heterotrimer of A, B and C subunits.

The catalysed reaction is L-glutamyl-tRNA(Gln) + L-glutamine + ATP + H2O = L-glutaminyl-tRNA(Gln) + L-glutamate + ADP + phosphate + H(+). Functionally, allows the formation of correctly charged Gln-tRNA(Gln) through the transamidation of misacylated Glu-tRNA(Gln) in organisms which lack glutaminyl-tRNA synthetase. The reaction takes place in the presence of glutamine and ATP through an activated gamma-phospho-Glu-tRNA(Gln). This is Glutamyl-tRNA(Gln) amidotransferase subunit A from Orientia tsutsugamushi (strain Ikeda) (Rickettsia tsutsugamushi).